A 254-amino-acid polypeptide reads, in one-letter code: Hydroxyacylglutathione hydrolase (254 aa).

7 residues coordinate Zn(2+): H54, H56, D58, H59, H111, D130, and H168.

Belongs to the metallo-beta-lactamase superfamily. Glyoxalase II family. Monomer. Zn(2+) is required as a cofactor.

The enzyme catalyses an S-(2-hydroxyacyl)glutathione + H2O = a 2-hydroxy carboxylate + glutathione + H(+). It functions in the pathway secondary metabolite metabolism; methylglyoxal degradation; (R)-lactate from methylglyoxal: step 2/2. Functionally, thiolesterase that catalyzes the hydrolysis of S-D-lactoyl-glutathione to form glutathione and D-lactic acid. This Legionella pneumophila (strain Paris) protein is Hydroxyacylglutathione hydrolase.